We begin with the raw amino-acid sequence, 688 residues long: Glycine--tRNA ligase beta subunit (688 aa).

It belongs to the class-II aminoacyl-tRNA synthetase family. Tetramer of two alpha and two beta subunits.

Its subcellular location is the cytoplasm. It catalyses the reaction tRNA(Gly) + glycine + ATP = glycyl-tRNA(Gly) + AMP + diphosphate. This chain is Glycine--tRNA ligase beta subunit, found in Aliivibrio fischeri (strain ATCC 700601 / ES114) (Vibrio fischeri).